Reading from the N-terminus, the 193-residue chain is Probable nicotinate-nucleotide adenylyltransferase (193 aa).

The protein belongs to the NadD family.

The enzyme catalyses nicotinate beta-D-ribonucleotide + ATP + H(+) = deamido-NAD(+) + diphosphate. It participates in cofactor biosynthesis; NAD(+) biosynthesis; deamido-NAD(+) from nicotinate D-ribonucleotide: step 1/1. Catalyzes the reversible adenylation of nicotinate mononucleotide (NaMN) to nicotinic acid adenine dinucleotide (NaAD). The polypeptide is Probable nicotinate-nucleotide adenylyltransferase (Endomicrobium trichonymphae).